The sequence spans 535 residues: Dimethylaniline monooxygenase [N-oxide-forming] 2 (535 aa).

An N-acetylalanine modification is found at A2. Residues 9-13, E32, 40-41, and 61-62 each bind FAD; these read GAGVS, VW, and NT. Residues 60 to 61 and 195 to 198 each bind NADP(+); these read TN and SGSD. Residue K492 forms a Glycyl lysine isopeptide (Lys-Gly) (interchain with G-Cter in SUMO) linkage. The chain crosses the membrane as a helical span at residues 510 to 530; that stretch reads FSVSFLLKILGLLAVVVAFFC.

The protein belongs to the FMO family. Requires FAD as cofactor. It depends on Mg(2+) as a cofactor.

The protein resides in the microsome membrane. It is found in the endoplasmic reticulum membrane. Catalyzes the oxidative metabolism of numerous xenobiotics, including mainly therapeutic drugs and insecticides that contain a soft nucleophile, most commonly nitrogen and sulfur and participates to their bioactivation. In Pan troglodytes (Chimpanzee), this protein is Dimethylaniline monooxygenase [N-oxide-forming] 2.